A 100-amino-acid chain; its full sequence is NADH-quinone oxidoreductase subunit K (100 aa).

A run of 3 helical transmembrane segments spans residues 3–23 (PTAY…IGVL), 29–49 (IMIF…LVAF), and 63–83 (FIVM…IVAI).

It belongs to the complex I subunit 4L family. NDH-1 is composed of 15 different subunits. Subunits NuoA, H, J, K, L, M, N constitute the membrane sector of the complex.

Its subcellular location is the cell membrane. The catalysed reaction is a quinone + NADH + 5 H(+)(in) = a quinol + NAD(+) + 4 H(+)(out). Its function is as follows. NDH-1 shuttles electrons from NADH, via FMN and iron-sulfur (Fe-S) centers, to quinones in the respiratory chain. The immediate electron acceptor for the enzyme in this species is believed to be a menaquinone. Couples the redox reaction to proton translocation (for every two electrons transferred, four hydrogen ions are translocated across the cytoplasmic membrane), and thus conserves the redox energy in a proton gradient. The chain is NADH-quinone oxidoreductase subunit K from Deinococcus geothermalis (strain DSM 11300 / CIP 105573 / AG-3a).